The primary structure comprises 313 residues: Ribosomal RNA small subunit methyltransferase H (313 aa).

Residues 34 to 36 (GGH), Asp-55, Phe-82, Asp-103, and Gln-110 each bind S-adenosyl-L-methionine.

This sequence belongs to the methyltransferase superfamily. RsmH family.

Its subcellular location is the cytoplasm. The catalysed reaction is cytidine(1402) in 16S rRNA + S-adenosyl-L-methionine = N(4)-methylcytidine(1402) in 16S rRNA + S-adenosyl-L-homocysteine + H(+). Functionally, specifically methylates the N4 position of cytidine in position 1402 (C1402) of 16S rRNA. The sequence is that of Ribosomal RNA small subunit methyltransferase H from Pelobacter propionicus (strain DSM 2379 / NBRC 103807 / OttBd1).